Consider the following 248-residue polypeptide: ATP synthase subunit a, chloroplastic (248 aa).

5 helical membrane passes run 38 to 58 (QVLITSWVVIAILLGSAAIAV), 96 to 116 (VPFIGTLFLFIFVSNWSGALL), 135 to 155 (INTTVALALPTSVAYFYAGLT), 200 to 220 (LVVVVLVSLVPLVIPIPVMFL), and 221 to 241 (GLFTSGIQALIFATLAAAYIG).

This sequence belongs to the ATPase A chain family. In terms of assembly, F-type ATPases have 2 components, CF(1) - the catalytic core - and CF(0) - the membrane proton channel. CF(1) has five subunits: alpha(3), beta(3), gamma(1), delta(1), epsilon(1). CF(0) has four main subunits: a, b, b' and c.

It localises to the plastid. The protein localises to the chloroplast thylakoid membrane. In terms of biological role, key component of the proton channel; it plays a direct role in the translocation of protons across the membrane. The sequence is that of ATP synthase subunit a, chloroplastic from Nymphaea alba (White water-lily).